A 217-amino-acid polypeptide reads, in one-letter code: ATP phosphoribosyltransferase (217 aa).

It belongs to the ATP phosphoribosyltransferase family. Short subfamily. As to quaternary structure, heteromultimer composed of HisG and HisZ subunits.

The protein resides in the cytoplasm. The enzyme catalyses 1-(5-phospho-beta-D-ribosyl)-ATP + diphosphate = 5-phospho-alpha-D-ribose 1-diphosphate + ATP. The protein operates within amino-acid biosynthesis; L-histidine biosynthesis; L-histidine from 5-phospho-alpha-D-ribose 1-diphosphate: step 1/9. Functionally, catalyzes the condensation of ATP and 5-phosphoribose 1-diphosphate to form N'-(5'-phosphoribosyl)-ATP (PR-ATP). Has a crucial role in the pathway because the rate of histidine biosynthesis seems to be controlled primarily by regulation of HisG enzymatic activity. This Prochlorococcus marinus (strain MIT 9313) protein is ATP phosphoribosyltransferase.